The chain runs to 418 residues: MAMASPAIGQRPYPLLLDPEPPRYLQSLSGPELPPPPPDRSSRLCVPAPLSTAPGAREGRSARRAARGNLEPPPRASRPARPLRPGLQQRLRRRPGAPRPRDVRSIFEQPQDPRVPAERGEGHCFAELVLPGGPGWCDLCGREVLRQALRCTNCKFTCHPECRSLIQLDCSQQEGLSRDRPSPESTLTVTFSQNVCKPVEETQRPPTLQEIKQKIDSYNTREKNCLGMKLSEDGTYTGFIKVHLKLRRPVTVPAGIRPQSIYDAIKEVNLAATTDKRTSFYLPLDAIKQLHISSTTTVSEVIQGLLKKFMVVDNPQKFALFKRIHKDGQVLFQKLSIADRPLYLRLLAGPDTEVLSFVLKENETGEVEWDAFSIPELQNFLTILEKEEQDKIQQVQKKYDKFRQKLEEALRESQGKPG.

The disordered stretch occupies residues 1–118 (MAMASPAIGQ…QPQDPRVPAE (118 aa)). Ala2 carries the N-acetylthreonine modification. The segment covering 77 to 89 (SRPARPLRPGLQQ) has biased composition (low complexity). Residues 122–170 (GHCFAELVLPGGPGWCDLCGREVLRQALRCTNCKFTCHPECRSLIQLDC) form a Phorbol-ester/DAG-type zinc finger. Phosphoserine is present on residues Ser182 and Ser279. Residues 274–364 (TDKRTSFYLP…LSFVLKENET (91 aa)) form the Ras-associating domain. Thr352 carries the post-translational modification Phosphothreonine. The region spanning 366–413 (EVEWDAFSIPELQNFLTILEKEEQDKIQQVQKKYDKFRQKLEEALRES) is the SARAH domain.

As to quaternary structure, interacts directly with activated HRAS; a RASSF5-STK4/MST1 complex probably associates with activated HRAS. Interacts with KRAS. Probably interacts with Ras-like GTPases RRAS, MRAS, RAP1B, RAP2A and RALA. Interacts with RRAS2. Can self-associate. Interacts with RSSF1 isoform A. The RSSF1 isoform A-RSSF5 heterodimer probably mediates the association of RSSF1 with HRAS. Isoform 2 interacts with activated RAP1A and ITGAL/LFA-1. Binds STK4/MST1, inhibiting STK4/MST1 autoactivation. As to expression, widely expressed. Frequently down-regulated in lung tumor cell lines and primary lung tumors.

It is found in the cytoplasm. The protein resides in the cytoskeleton. Potential tumor suppressor. Seems to be involved in lymphocyte adhesion by linking RAP1A activation upon T-cell receptor or chemokine stimulation to integrin activation. Isoform 2 stimulates lymphocyte polarization and the patch-like distribution of ITGAL/LFA-1, resulting in an enhanced adhesion to ICAM1. Together with RAP1A may participate in regulation of microtubule growth. The association of isoform 2 with activated RAP1A is required for directional movement of endothelial cells during wound healing. May be involved in regulation of Ras apoptotic function. The RASSF5-STK4/MST1 complex may mediate HRAS and KRAS induced apoptosis. In Homo sapiens (Human), this protein is Ras association domain-containing protein 5 (RASSF5).